Reading from the N-terminus, the 262-residue chain is Oxidoreductase AgnL4 (262 aa).

The protein belongs to the avfA family.

It functions in the pathway secondary metabolite biosynthesis. Functionally, oxidoreductase; part of the gene cluster that mediates the biosynthesis of agnestins, dihydroxy-xanthone metabolites. The pathway begins with the assembly and cyclization of atrochrysone thioester by the non-reducing polyketide synthase Agnpks1. The atrochrysone carboxyl ACP thioesterase AgnL7 then breaks the thioester bond and releases the atrochrysone carboxylic acid as the first enzyme-free intermediate. The decarboxylase AgnL1 then catalyzes the concerted decarboxylation-elimination required to convert atochrysone carboxylic acid into emodin anthrone, which is further oxidized to emodin by the anthrone oxygenase AgnL2. Emodin then undergoes reduction catalyzed by the oxidoreductase AgnL4 to yield the dihydroquinone tautomer which is the substrate for reduction by the short chain dehydrogenase AgnL6 reduction to produce hydroxyketone, followed by AgnL8 dehydration and likely spontaneous autoxidation to chrysophanol. Baeyer-Villiger oxidation by the oxidase AgnL3 leads to monodictyphenone via cleavage of the C-10/C-10a bond of chrysophanol. Alternative cleavage at the C-4a/C-10 bond of chrysophanol also leads to the formation some cephalone F. Further conversion to agnestins A and B, requires reduction to dihydro-monodictyphenone, oxidation to agnestin C probably via an epoxide, and rearrangement to either agnestin A or agnestin B directly, although agnestin A or agnestin B can also interconvert. Within the cluster, AgnR1 is the only unassigned oxidoreductase present which could be involved in this conversion. However, AgnR1 seems not to be involved in this step, and thus genes involved in the proposed oxidation/reduction may be located elsewhere on the genome. Further agnestin A derivatives are probably formed by spontaneous decarboxylations, dehydrations and methanolysis reactions. The polypeptide is Oxidoreductase AgnL4 (Paecilomyces divaricatus (Penicillium divaricatum)).